A 455-amino-acid polypeptide reads, in one-letter code: Adenylosuccinate synthetase isozyme 2 (455 aa).

The tract at residues 1 to 25 (MSDSGDAQPQDGGNSSSSRGKSPSV) is disordered. The segment covering 12-25 (GGNSSSSRGKSPSV) has biased composition (low complexity). GTP-binding positions include 38–44 (GDEGKGK) and 66–68 (GHT). Residue D39 is the Proton acceptor of the active site. Residues D39 and G66 each contribute to the Mg(2+) site. D39 serves as a coordination point for substrate. IMP contacts are provided by residues 39–42 (DEGK), 64–67 (NAGH), T161, R175, N254, T269, and R333. H67 functions as the Proton donor in the catalytic mechanism. 329-335 (VTTGRKR) is a substrate binding site. Residues R335, 361–363 (KLD), and 443–446 (GVGK) contribute to the GTP site.

Belongs to the adenylosuccinate synthetase family. As to quaternary structure, homodimer. Mg(2+) serves as cofactor.

It is found in the cytoplasm. The protein localises to the mitochondrion. The catalysed reaction is IMP + L-aspartate + GTP = N(6)-(1,2-dicarboxyethyl)-AMP + GDP + phosphate + 2 H(+). It participates in purine metabolism; AMP biosynthesis via de novo pathway; AMP from IMP: step 1/2. Inhibited competitively by AMP and IMP and non-competitively by fructose 1,6-bisphosphate. Functionally, plays an important role in the de novo pathway and in the salvage pathway of purine nucleotide biosynthesis. Catalyzes the first committed step in the biosynthesis of AMP from IMP. This chain is Adenylosuccinate synthetase isozyme 2 (adss2), found in Danio rerio (Zebrafish).